A 359-amino-acid chain; its full sequence is Palmitoyltransferase ERF2 (359 aa).

The disordered stretch occupies residues 1–21 (MALVSRRSTRSESTSITKEEH). The Cytoplasmic portion of the chain corresponds to 1 to 75 (MALVSRRSTR…RFRTVKGAKP (75 aa)). A helical transmembrane segment spans residues 76 to 96 (LWLGVLLAIVCPMVLFSIFEA). At 97–104 (HKLWHTQN) the chain is on the lumenal side. Residues 105–125 (GYKVLVIFFYYFWVITLASFI) traverse the membrane as a helical segment. Residues 126-217 (RTATSDPGVL…NCIGKRNYRF (92 aa)) lie on the Cytoplasmic side of the membrane. The 51-residue stretch at 173-223 (KYCPSCRIWRPPRSSHCSTCNVCVMVHDHHCIWVNNCIGKRNYRFFLIFLL) folds into the DHHC domain. Catalysis depends on Cys-203, which acts as the S-palmitoyl cysteine intermediate. The chain crosses the membrane as a helical span at residues 218 to 238 (FLIFLLGAILSSVILLTNCAI). Over 239-250 (HIARESGGPRDC) the chain is Lumenal. Residues 251–271 (PVAILLLCYAGLTLWYPAILF) form a helical membrane-spanning segment. The Cytoplasmic segment spans residues 272–359 (TYHIFMAGNQ…AHSFEKIQKI (88 aa)).

Belongs to the DHHC palmitoyltransferase family. ERF2/ZDHHC9 subfamily. Interacts with SHR5. Post-translationally, autopalmitoylated.

The protein localises to the endoplasmic reticulum membrane. The enzyme catalyses L-cysteinyl-[protein] + hexadecanoyl-CoA = S-hexadecanoyl-L-cysteinyl-[protein] + CoA. Functionally, the ERF2-SHR5 complex is a palmitoyltransferase specific for Ras proteins. Palmitoylates RAS2, which is required for its proper plasma membrane localization. The sequence is that of Palmitoyltransferase ERF2 (ERF2) from Saccharomyces cerevisiae (strain ATCC 204508 / S288c) (Baker's yeast).